The chain runs to 240 residues: 4-hydroxy-tetrahydrodipicolinate reductase (240 aa).

Residues 79–81 (ATT) and 103–106 (SANM) each bind NAD(+). H135 acts as the Proton donor/acceptor in catalysis. H136 provides a ligand contact to (S)-2,3,4,5-tetrahydrodipicolinate. Residue K139 is the Proton donor of the active site. 145–146 (GT) contacts (S)-2,3,4,5-tetrahydrodipicolinate.

Belongs to the DapB family.

It localises to the cytoplasm. It catalyses the reaction (S)-2,3,4,5-tetrahydrodipicolinate + NAD(+) + H2O = (2S,4S)-4-hydroxy-2,3,4,5-tetrahydrodipicolinate + NADH + H(+). It carries out the reaction (S)-2,3,4,5-tetrahydrodipicolinate + NADP(+) + H2O = (2S,4S)-4-hydroxy-2,3,4,5-tetrahydrodipicolinate + NADPH + H(+). Its pathway is amino-acid biosynthesis; L-lysine biosynthesis via DAP pathway; (S)-tetrahydrodipicolinate from L-aspartate: step 4/4. Functionally, catalyzes the conversion of 4-hydroxy-tetrahydrodipicolinate (HTPA) to tetrahydrodipicolinate. In Staphylococcus saprophyticus subsp. saprophyticus (strain ATCC 15305 / DSM 20229 / NCIMB 8711 / NCTC 7292 / S-41), this protein is 4-hydroxy-tetrahydrodipicolinate reductase.